Here is a 241-residue protein sequence, read N- to C-terminus: Interleukin-6 (241 aa).

A disordered region spans residues 1–25 (MNFTEGCEATGRRPGSAGSRRRRAP). The first 46 residues, 1 to 46 (MNFTEGCEATGRRPGSAGSRRRRAPRPGPVALLPLLLPLLLPPAAA), serve as a signal peptide directing secretion. Residues cysteine 122 and cysteine 132 are joined by a disulfide bond.

It belongs to the IL-6 superfamily. Component of a hexamer of two molecules each of IL6, IL6R and IL6ST; first binds to IL6R to associate with the signaling subunit IL6ST.

The protein localises to the secreted. Cytokine with a wide variety of biological functions in immunity, tissue regeneration, and metabolism. Binds to IL6R, then the complex associates to the signaling subunit IL6ST/gp130 to trigger the intracellular IL6-signaling pathway. The interaction with the membrane-bound IL6R and IL6ST stimulates 'classic signaling', whereas the binding of IL6 and soluble IL6R to IL6ST stimulates 'trans-signaling'. Alternatively, 'cluster signaling' occurs when membrane-bound IL6:IL6R complexes on transmitter cells activate IL6ST receptors on neighboring receiver cells. The sequence is that of Interleukin-6 (IL6) from Gallus gallus (Chicken).